Here is a 53-residue protein sequence, read N- to C-terminus: Rubredoxin 3 (53 aa).

The Rubredoxin-like domain maps to 1-53 (MQKWVCVPCGYEYDPADGDPENGIEPGTAFEDLPEDWVCPVCGVDKSFFEPVS). The Fe cation site is built by cysteine 6, cysteine 9, cysteine 39, and cysteine 42.

Belongs to the rubredoxin family. Monomer. It depends on Fe(3+) as a cofactor.

Its function is as follows. Functions as an electron acceptor for pyruvate ferredoxin oxidoreductase (PFOR). This is Rubredoxin 3 (rub3) from Chlorobaculum tepidum (strain ATCC 49652 / DSM 12025 / NBRC 103806 / TLS) (Chlorobium tepidum).